The following is a 303-amino-acid chain: MYYGFDIGGTKIALGVFDSGRQLQWEKRVPTPRDSYDAFLDAVCELVAEADQRFGCKGSVGIGIPGMPETEDGTLYAANVPAASGKPLRADLSARLDRDVRLDNDANCFALSEAWDDEFTQYPLVMGLILGTGVGGGLIFNGKPITGKSYITGEFGHMRLPVDALTMMGLDFPLRRCGCGQHGCIENYLSGRGFAWLYQHYYHQPLQAPEIIALYDQGDEQARAHVERYLDLLAVCLGNILTIVDPDLVVIGGGLSNFPAITTQLADRLPRHLLPVARVPRIERARHGDAGGMRGAAFLHLTD.

ATP contacts are provided by residues 4-11 (GFDIGGTK) and 133-140 (GVGGGLIF). Residues His157, Cys177, Cys179, and Cys184 each contribute to the Zn(2+) site.

This sequence belongs to the ROK (NagC/XylR) family. NagK subfamily.

It carries out the reaction N-acetyl-D-glucosamine + ATP = N-acetyl-D-glucosamine 6-phosphate + ADP + H(+). It functions in the pathway cell wall biogenesis; peptidoglycan recycling. Catalyzes the phosphorylation of N-acetyl-D-glucosamine (GlcNAc) derived from cell-wall degradation, yielding GlcNAc-6-P. The sequence is that of N-acetyl-D-glucosamine kinase from Escherichia coli (strain K12 / DH10B).